A 218-amino-acid chain; its full sequence is Phosphatidylserine decarboxylase proenzyme (218 aa).

The Schiff-base intermediate with substrate; via pyruvic acid role is filled by Ser-182. Ser-182 is subject to Pyruvic acid (Ser); by autocatalysis.

Belongs to the phosphatidylserine decarboxylase family. PSD-A subfamily. As to quaternary structure, heterodimer of a large membrane-associated beta subunit and a small pyruvoyl-containing alpha subunit. The cofactor is pyruvate. Is synthesized initially as an inactive proenzyme. Formation of the active enzyme involves a self-maturation process in which the active site pyruvoyl group is generated from an internal serine residue via an autocatalytic post-translational modification. Two non-identical subunits are generated from the proenzyme in this reaction, and the pyruvate is formed at the N-terminus of the alpha chain, which is derived from the carboxyl end of the proenzyme. The post-translation cleavage follows an unusual pathway, termed non-hydrolytic serinolysis, in which the side chain hydroxyl group of the serine supplies its oxygen atom to form the C-terminus of the beta chain, while the remainder of the serine residue undergoes an oxidative deamination to produce ammonia and the pyruvoyl prosthetic group on the alpha chain.

It localises to the cell membrane. The catalysed reaction is a 1,2-diacyl-sn-glycero-3-phospho-L-serine + H(+) = a 1,2-diacyl-sn-glycero-3-phosphoethanolamine + CO2. Its pathway is phospholipid metabolism; phosphatidylethanolamine biosynthesis; phosphatidylethanolamine from CDP-diacylglycerol: step 2/2. In terms of biological role, catalyzes the formation of phosphatidylethanolamine (PtdEtn) from phosphatidylserine (PtdSer). The polypeptide is Phosphatidylserine decarboxylase proenzyme (Oleidesulfovibrio alaskensis (strain ATCC BAA-1058 / DSM 17464 / G20) (Desulfovibrio alaskensis)).